The sequence spans 405 residues: Putative colanic acid polymerase (405 aa).

Transmembrane regions (helical) follow at residues 5–25 (IRICSYLLLPLIYLLVNVKIA), 27–47 (LGESFPITIVTFLPVLLLLFL), 55–75 (LMIALGIGAGLTAFNYLFGQS), 81–101 (YVTSTMLFVYIVIIIGMVWSI), 117–137 (FFYLVVGLVVALAAVEMAQII), 171–191 (TALYFEPAFFALALISIWLSI), 204–224 (MILAGIILSGSFSGVMTFILF), 244–264 (PLALISLAVFLVGVVIAFPYI), 282–302 (IVGPLVMVGYSLTHIDGVVRF), 327–347 (GLYLLIIYFSWFAVFLSLWYM), and 376–396 (LFFTGSIFSPEYAFLIVCPFI).

It is found in the cell inner membrane. The protein operates within slime biogenesis; slime polysaccharide biosynthesis. The protein is Putative colanic acid polymerase (wcaD) of Escherichia coli (strain K12).